A 615-amino-acid chain; its full sequence is Angiotensin-converting enzyme (615 aa).

Residues 1–17 form the signal peptide; it reads MRLFLLALLATLAVTQA. Residues 19-607 enclose the Peptidase M2 domain; it reads VKEEIQAKEY…IKNNVHIGWT (589 aa). N-linked (GlcNAc...) asparagine glycosylation occurs at Asn-53. A disulfide bridge connects residues Cys-133 and Cys-141. N-linked (GlcNAc...) asparagine glycosylation is found at Asn-196 and Asn-311. Cys-336 and Cys-354 are disulfide-bonded. His-367 contributes to the Zn(2+) binding site. Glu-368 serves as the catalytic Proton acceptor. 2 residues coordinate Zn(2+): His-371 and Glu-395. Catalysis depends on His-497, which acts as the Proton donor. A disulfide bridge links Cys-522 with Cys-540.

It belongs to the peptidase M2 family. The cofactor is Zn(2+). Glycosylated. Expressed in vesicular structures in spermatocytes and early spermatids (at protein level).

Its subcellular location is the secreted. It is found in the extracellular space. It catalyses the reaction Release of a C-terminal dipeptide, oligopeptide-|-Xaa-Yaa, when Xaa is not Pro, and Yaa is neither Asp nor Glu. Thus, conversion of angiotensin I to angiotensin II, with increase in vasoconstrictor activity, but no action on angiotensin II.. Its activity is regulated as follows. Inhibited by captopril and, to a lesser extent, by lisinopril, trandolaprilat, fosinoprilat and enalaprilat. Functionally, may be involved in the specific maturation or degradation of a number of bioactive peptides. May play a role in the contractions of the heart, gut and testes, and in spermatid differentiation. The polypeptide is Angiotensin-converting enzyme (Ance) (Drosophila melanogaster (Fruit fly)).